A 161-amino-acid chain; its full sequence is Endoribonuclease YbeY (161 aa).

Residues His-120, His-124, and Asp-130 each contribute to the Zn(2+) site.

It belongs to the endoribonuclease YbeY family. Zn(2+) serves as cofactor.

It localises to the cytoplasm. Its function is as follows. Single strand-specific metallo-endoribonuclease involved in late-stage 70S ribosome quality control and in maturation of the 3' terminus of the 16S rRNA. The protein is Endoribonuclease YbeY of Chlamydia trachomatis serovar A (strain ATCC VR-571B / DSM 19440 / HAR-13).